Reading from the N-terminus, the 187-residue chain is Protein GrpE (187 aa).

A disordered region spans residues 1–26 (MHDPKESLETNIQETESQEKLPETPI).

Belongs to the GrpE family. Homodimer.

Its subcellular location is the cytoplasm. Participates actively in the response to hyperosmotic and heat shock by preventing the aggregation of stress-denatured proteins, in association with DnaK and GrpE. It is the nucleotide exchange factor for DnaK and may function as a thermosensor. Unfolded proteins bind initially to DnaJ; upon interaction with the DnaJ-bound protein, DnaK hydrolyzes its bound ATP, resulting in the formation of a stable complex. GrpE releases ADP from DnaK; ATP binding to DnaK triggers the release of the substrate protein, thus completing the reaction cycle. Several rounds of ATP-dependent interactions between DnaJ, DnaK and GrpE are required for fully efficient folding. The protein is Protein GrpE of Dichelobacter nodosus (strain VCS1703A).